The primary structure comprises 500 residues: Mucin-like protein 3 (500 aa).

Positions 1-27 are cleaved as a signal peptide; it reads MAQPTSGLYSTFGFFICLLFFPASWEA. Topologically, residues 28–429 are extracellular; that stretch reads GANTFQELQK…GENNSFPVWA (402 aa). 2 disordered regions span residues 55–198 and 275–324; these read THRA…SQKP and EGKT…PTAS. A compositionally biased stretch (basic and acidic residues) spans 58–71; sequence ASSDQKTSRQHPPD. Residues 76 to 89 show a composition bias toward polar residues; the sequence is TATQKAKNQCNTTR. N-linked (GlcNAc...) asparagine glycosylation occurs at Asn108. Basic and acidic residues-rich tracts occupy residues 111–123 and 132–142; these read VRHE…EKDL and ARNERSADDPR. The N-linked (GlcNAc...) asparagine glycan is linked to Asn148. 3 stretches are compositionally biased toward polar residues: residues 159 to 178, 279 to 289, and 298 to 324; these read PRRN…TTKS, SPASESSSQAQ, and TSAS…PTAS. The helical transmembrane segment at 430–450 threads the bilayer; that stretch reads IVIVILMAVIILLVFIGLILL. Topologically, residues 451–500 are cytoplasmic; sequence VSCASRARHVLTQNSEEPEPQPEDKGSRNSYPVYLMEQQNLNLNQIPSPP.

The protein localises to the cell membrane. The protein resides in the cytoplasm. May modulate NF-kappaB signaling and play a role in cell growth. The polypeptide is Mucin-like protein 3 (Mus musculus (Mouse)).